The sequence spans 513 residues: Probable lipid II flippase MurJ (513 aa).

A run of 15 helical transmembrane segments spans residues 3–23, 25–45, 83–103, 133–153, 162–182, 186–206, 221–241, 245–265, 271–291, 313–333, 354–374, 382–402, 405–425, 441–461, and 481–501; these read ILKSLISLSLITFISRILGFM, DLLIAYSFGASGITDAFFLAF, FISNILGLMIIILSLFTAFGI, IMFPYIFFVSLGSLTGSILNA, YSSIFLNLSMIMFISFVTAYF, ILSLAWAVIVGGVFQILYQFP, ILNLGVLKFLKQIGIVALGMS, VSIIIATISSSFLISGSISWI, LVEFISGIFGVSLSTILLPLL, LVCILVIPSIIILFTLSESLI, IEFYSIGLLPFVLIKILLAGF, TPMKISIFILVLTQLMNIFFI, FQYTSFALAISLASWINFFLL, WLRFLLKIFAAAMVMLILLFI, and LFYICASSGGGYLFTLFCLGL.

This sequence belongs to the MurJ/MviN family.

It is found in the cell inner membrane. It participates in cell wall biogenesis; peptidoglycan biosynthesis. In terms of biological role, involved in peptidoglycan biosynthesis. Transports lipid-linked peptidoglycan precursors from the inner to the outer leaflet of the cytoplasmic membrane. In Buchnera aphidicola subsp. Baizongia pistaciae (strain Bp), this protein is Probable lipid II flippase MurJ.